Here is a 316-residue protein sequence, read N- to C-terminus: Na(+)/H(+) exchange regulatory cofactor NHE-RF2 (316 aa).

One can recognise a PDZ 1 domain in the interval 11–91 (LCRLVRGEQG…ETRLLVVDKE (81 aa)). Residues 109-148 (QRGLPPAHDPWEPKPDWARAGSLSSDAGQKDVNGPPRELR) form a disordered region. Phosphoserine occurs at positions 130, 183, and 254. A PDZ 2 domain is found at 151–231 (LCHLRKGPQG…EARLLLVDPE (81 aa)). Residues 244-303 (TEEHVEGPLPSPITNGTSPAQDASAWKRDPFQESGLHLSPTAAEAKEKARATRVNKRAPQ) form a disordered region. Residues 255–264 (PITNGTSPAQ) are compositionally biased toward polar residues. Phosphoserine is present on serine 282.

Homodimer, and heterodimer with NHERF1. Binds ADRB2, SLC9A3, P2RY1, P2YR2, SRY, RDX, PDZK1 and LPAR2. Found in a complex with EZR, PODXL and NHERF2. Interacts (via the PDZ domains) with PODXL (via the C-terminal PDZ-binding motif DTHL); interaction is detected in glomerular epithelium cells. Binds PODXL. Interacts with SGK1 and KCNJ1/ROMK1. Interacts (via the PDZ domains) with SLC26A6. In terms of tissue distribution, detected in kidney glomeruli.

It localises to the endomembrane system. Its subcellular location is the nucleus. The protein resides in the apical cell membrane. Its function is as follows. Scaffold protein that connects plasma membrane proteins with members of the ezrin/moesin/radixin family and thereby helps to link them to the actin cytoskeleton and to regulate their surface expression. Necessary for cAMP-mediated phosphorylation and inhibition of SLC9A3. May also act as scaffold protein in the nucleus. The polypeptide is Na(+)/H(+) exchange regulatory cofactor NHE-RF2 (NHERF2) (Oryctolagus cuniculus (Rabbit)).